The following is a 328-amino-acid chain: Peroxidase 71 (328 aa).

The first 23 residues, 1–23 (MGLVRSLCLLITFLNCLIISVHG), serve as a signal peptide directing secretion. Disulfide bonds link Cys44/Cys120, Cys77/Cys82, Cys126/Cys324, and Cys204/Cys235. The active-site Proton acceptor is His75. 5 residues coordinate Ca(2+): Asp76, Val79, Gly81, Asp83, and Ser85. Pro167 contributes to the substrate binding site. Residue His197 coordinates heme b. Thr198 contacts Ca(2+). Asn213 carries an N-linked (GlcNAc...) asparagine glycan. 3 residues coordinate Ca(2+): Asp248, Ser251, and Asp256. N-linked (GlcNAc...) asparagine glycosylation occurs at Asn262.

This sequence belongs to the peroxidase family. Classical plant (class III) peroxidase subfamily. Heme b serves as cofactor. Requires Ca(2+) as cofactor. As to expression, slightly expressed in roots.

Its subcellular location is the secreted. It carries out the reaction 2 a phenolic donor + H2O2 = 2 a phenolic radical donor + 2 H2O. Functionally, removal of H(2)O(2), oxidation of toxic reductants, biosynthesis and degradation of lignin, suberization, auxin catabolism, response to environmental stresses such as wounding, pathogen attack and oxidative stress. These functions might be dependent on each isozyme/isoform in each plant tissue. This is Peroxidase 71 (PER71) from Arabidopsis thaliana (Mouse-ear cress).